Reading from the N-terminus, the 295-residue chain is GTPase Era (295 aa).

One can recognise an Era-type G domain in the interval 3-170; the sequence is KSGFVTIVGR…VDLMKTELPE (168 aa). The interval 11-18 is G1; it reads GRPNVGKS. 11–18 lines the GTP pocket; sequence GRPNVGKS. Positions 37 to 41 are G2; sequence QTTRN. The segment at 58–61 is G3; the sequence is DTPG. GTP-binding positions include 58-62 and 120-123; these read DTPGI and NKID. Positions 120 to 123 are G4; that stretch reads NKID. Residues 149–151 are G5; it reads IAA. Positions 201-278 constitute a KH type-2 domain; it reads LRDEVPHGIA…NVKIWVKVRK (78 aa).

This sequence belongs to the TRAFAC class TrmE-Era-EngA-EngB-Septin-like GTPase superfamily. Era GTPase family. Monomer.

The protein resides in the cytoplasm. It localises to the cell membrane. Its function is as follows. An essential GTPase that binds both GDP and GTP, with rapid nucleotide exchange. Plays a role in 16S rRNA processing and 30S ribosomal subunit biogenesis and possibly also in cell cycle regulation and energy metabolism. This chain is GTPase Era, found in Clostridium botulinum (strain Alaska E43 / Type E3).